A 634-amino-acid chain; its full sequence is Chaperone protein DnaK (634 aa).

A Phosphothreonine; by autocatalysis modification is found at Thr-197. A compositionally biased stretch (basic and acidic residues) spans 515–528 (LHKEDDKKRKESVD). Disordered stretches follow at residues 515–536 (LHKE…ADAI) and 595–634 (YKAA…AEVE). Over residues 603–615 (NAGGTAGGNGNAG) the composition is skewed to gly residues.

Belongs to the heat shock protein 70 family.

Acts as a chaperone. The polypeptide is Chaperone protein DnaK (Campylobacter hominis (strain ATCC BAA-381 / DSM 21671 / CCUG 45161 / LMG 19568 / NCTC 13146 / CH001A)).